We begin with the raw amino-acid sequence, 143 residues long: Large ribosomal subunit protein uL13c (143 aa).

This sequence belongs to the universal ribosomal protein uL13 family. As to quaternary structure, part of the 50S ribosomal subunit.

The protein resides in the plastid. Its subcellular location is the chloroplast. This Gracilaria tenuistipitata var. liui (Red alga) protein is Large ribosomal subunit protein uL13c.